The primary structure comprises 675 residues: Methionine--tRNA ligase (675 aa).

Positions 15–25 match the 'HIGH' region motif; that stretch reads PYANGPIHLGH. Residues Cys146, Cys149, Cys159, and Cys162 each coordinate Zn(2+). A 'KMSKS' region motif is present at residues 332 to 336; the sequence is KMSKS. Lys335 is a binding site for ATP. In terms of domain architecture, tRNA-binding spans 573–675; that stretch reads DFAKVDMRVA…SGAQPGMQVK (103 aa).

Belongs to the class-I aminoacyl-tRNA synthetase family. MetG type 1 subfamily. In terms of assembly, homodimer. Zn(2+) is required as a cofactor.

The protein localises to the cytoplasm. It catalyses the reaction tRNA(Met) + L-methionine + ATP = L-methionyl-tRNA(Met) + AMP + diphosphate. In terms of biological role, is required not only for elongation of protein synthesis but also for the initiation of all mRNA translation through initiator tRNA(fMet) aminoacylation. The chain is Methionine--tRNA ligase from Photorhabdus laumondii subsp. laumondii (strain DSM 15139 / CIP 105565 / TT01) (Photorhabdus luminescens subsp. laumondii).